A 418-amino-acid polypeptide reads, in one-letter code: Voltage-gated ClC-type chloride channel ClcB (418 aa).

Methionine 1 is a topological domain (cytoplasmic). Residues 2-22 (FHRLLIATVVGILAAFAVAGF) traverse the membrane as a helical segment. Residues 23–53 (RHAMLLLEWLFLNNDSGSLVNAATNLSPWRR) are Periplasmic-facing. Residues 54–74 (LLTPALGGLAAGLLLMGWQKF) traverse the membrane as a helical segment. The Cytoplasmic portion of the chain corresponds to 75–145 (TQQRPHAPTD…QRFTPRQEWK (71 aa)). The chain crosses the membrane as a helical span at residues 146–166 (LWIACGAAAGMAAAYRAPLAG). Residues 167–177 (SLFIAEVLFGT) are Periplasmic-facing. Residues 178–200 (MMLASLGPVIISAVVALLVSNLI) traverse the membrane as a helical segment. Residues 201–221 (NHSDALLYNVQLSVTVQARDY) lie on the Cytoplasmic side of the membrane. The chain crosses the membrane as a helical span at residues 222 to 242 (ALIISTGVLAGLCGPLLLTLM). Over 243-257 (NACHRGFVSLKLAPP) the chain is Periplasmic. The chain crosses the membrane as a helical span at residues 258 to 278 (WQLALGGLIVGLLSLFTPAVW). Residues 279–290 (GNGYSTVQSFLT) lie on the Cytoplasmic side of the membrane. The helical transmembrane segment at 291–311 (APPLLMIIAGIFLCKLCAVLA) threads the bilayer. Residues 312–315 (SSGS) lie on the Periplasmic side of the membrane. The chain crosses the membrane as a helical span at residues 316–336 (GAPGGVFTPTLFIGLAIGMLY). Residues 337 to 351 (GRSLGLWFPDGEEIT) are Cytoplasmic-facing. Residues 352–372 (LLLGLTGMATLLAATTHAPIM) traverse the membrane as a helical segment. The Periplasmic segment spans residues 373-379 (STLMICE). A helical transmembrane segment spans residues 380 to 400 (MTGEYQLLPGLLIACVIASVI). Residues 401–418 (SRTLHRDSIYRQHTAQHS) lie on the Cytoplasmic side of the membrane.

It belongs to the chloride channel (TC 2.A.49) family. ClcB subfamily.

It localises to the cell inner membrane. Functionally, probably acts as an electrical shunt for an outwardly-directed proton pump that is linked to amino acid decarboxylation, as part of the extreme acid resistance (XAR) response. The protein is Voltage-gated ClC-type chloride channel ClcB (clcB) of Escherichia coli (strain K12).